The primary structure comprises 347 residues: Ketol-acid reductoisomerase (NADP(+)) (347 aa).

The region spanning 3–182 is the KARI N-terminal Rossmann domain; the sequence is TKMFYDKDID…GSGCAGILET (180 aa). Residues 26-29, arginine 49, serine 53, and 83-86 contribute to the NADP(+) site; these read YGAQ and DELQ. The active site involves histidine 108. Glycine 134 is a binding site for NADP(+). A KARI C-terminal knotted domain is found at 183–328; the sequence is TFEEETTEDL…KKVRAMMPWI (146 aa). Mg(2+) contacts are provided by aspartate 191, glutamate 195, glutamate 227, and glutamate 231. Substrate is bound at residue serine 252.

Belongs to the ketol-acid reductoisomerase family. Mg(2+) serves as cofactor.

The enzyme catalyses (2R)-2,3-dihydroxy-3-methylbutanoate + NADP(+) = (2S)-2-acetolactate + NADPH + H(+). It catalyses the reaction (2R,3R)-2,3-dihydroxy-3-methylpentanoate + NADP(+) = (S)-2-ethyl-2-hydroxy-3-oxobutanoate + NADPH + H(+). The protein operates within amino-acid biosynthesis; L-isoleucine biosynthesis; L-isoleucine from 2-oxobutanoate: step 2/4. It functions in the pathway amino-acid biosynthesis; L-valine biosynthesis; L-valine from pyruvate: step 2/4. Involved in the biosynthesis of branched-chain amino acids (BCAA). Catalyzes an alkyl-migration followed by a ketol-acid reduction of (S)-2-acetolactate (S2AL) to yield (R)-2,3-dihydroxy-isovalerate. In the isomerase reaction, S2AL is rearranged via a Mg-dependent methyl migration to produce 3-hydroxy-3-methyl-2-ketobutyrate (HMKB). In the reductase reaction, this 2-ketoacid undergoes a metal-dependent reduction by NADPH to yield (R)-2,3-dihydroxy-isovalerate. This is Ketol-acid reductoisomerase (NADP(+)) from Leuconostoc mesenteroides subsp. cremoris.